The primary structure comprises 415 residues: Histidine--tRNA ligase (415 aa).

It belongs to the class-II aminoacyl-tRNA synthetase family. As to quaternary structure, homodimer.

It localises to the cytoplasm. It carries out the reaction tRNA(His) + L-histidine + ATP = L-histidyl-tRNA(His) + AMP + diphosphate + H(+). In Clostridium botulinum (strain Kyoto / Type A2), this protein is Histidine--tRNA ligase.